We begin with the raw amino-acid sequence, 527 residues long: Optineurin (527 aa).

Disordered regions lie at residues 1–32 (MSHQPLSCLTEKEDSPTESTGNGPPYLAHPNL) and 101–143 (SHEN…KDQL). Positions 38-170 (EELLQQMKEL…VSELQLKLNS (133 aa)) form a coiled coil. Residues 58-209 (MKLNNQAMKG…GPTRTVSTSR (152 aa)) are interaction with Rab8. Positions 176 to 181 (DSFVEI) match the LIR motif. Ser-177 is subject to Phosphoserine; by TBK1. Positions 186–197 (GEAEGSVKEIKH) are enriched in basic and acidic residues. Disordered stretches follow at residues 186-214 (GEAEGSVKEIKHSPGPTRTVSTSRALSKY) and 262-292 (SDFEKKASNRSEIETQTEGSTEKENDEEKGL). The residue at position 198 (Ser-198) is a Phosphoserine. Polar residues predominate over residues 201-210 (PTRTVSTSRA). Positions 239 to 458 (CLREGNQKVE…LLKENDAFED (220 aa)) form a coiled coil. Basic and acidic residues-rich tracts occupy residues 262-274 (SDFEKKASNRSEI) and 281-292 (STEKENDEEKGL). An interaction with HD region spans residues 361 to 527 (TRKESEKVDR…LQIHVMDCII (167 aa)). Residues 362 to 470 (RKESEKVDRA…RQSLMEMQSR (109 aa)) form an interaction with MYO6 region. Residues 424-429 (DFHAER) carry the UBAN motif. The residue at position 476 (Ser-476) is a Phosphoserine. A CCHC NOA-type zinc finger spans residues 497–527 (QRNIPIHSCPKCGEVLPDIDTLQIHVMDCII). Zn(2+)-binding residues include Cys-505, Cys-508, His-521, and Cys-525.

In terms of assembly, self-associates. Interacts with HD. Interacts with GTF3A. Interacts with MYO6. Interacts (via UBAN) with ubiquitinated TFRC. Interacts with GTP-bound Rab8 (RAB8A and/or RAB8B). Interacts with TBC1D17. Interacts with TBK1. Interacts with TRAF3. Binds to linear ubiquitin chains. Interacts with LC3 family members MAP1LC3A, MAP1LC3B, GABARAP, GABARAPL1 and GABARAPL2; OPTN phosphorylation increases the association (at least with MAP1LC3B). Interacts with RAB12; the interaction may be indirect. Interacts with TBK1; this interaction leads to the Golgi localization of TBK1 and its subsequent activation. Interacts with palmitoyltransferase ZDHHC17/HIP14; the interaction does not lead to palmitoylation of OPTN. Interacts with CYLD. Interacts with TOM1; the interaction is indirect and is mediated by MYO6, which acts as a bridge between TOM1 and OPTN. Interacts with USP12; the interaction is independent of USP12 deubiquitinase activity and may be involved in regulation of autophagic flux. Phosphorylated by TBK1, leading to restrict bacterial proliferation in case of infection.

The protein resides in the cytoplasm. The protein localises to the perinuclear region. It localises to the golgi apparatus. It is found in the trans-Golgi network. Its subcellular location is the cytoplasmic vesicle. The protein resides in the autophagosome. The protein localises to the recycling endosome. In terms of biological role, plays an important role in the maintenance of the Golgi complex, in membrane trafficking, in exocytosis, through its interaction with myosin VI and Rab8. Links myosin VI to the Golgi complex and plays an important role in Golgi ribbon formation. Negatively regulates the induction of IFNB in response to RNA virus infection. Plays a neuroprotective role in the eye and optic nerve. Probably part of the TNF-alpha signaling pathway that can shift the equilibrium toward induction of cell death. May act by regulating membrane trafficking and cellular morphogenesis via a complex that contains Rab8 and huntingtin (HD). Mediates the interaction of Rab8 with the probable GTPase-activating protein TBC1D17 during Rab8-mediated endocytic trafficking, such as that of transferrin receptor (TFRC/TfR); regulates Rab8 recruitment to tubules emanating from the endocytic recycling compartment. Autophagy receptor that interacts directly with both the cargo to become degraded and an autophagy modifier of the MAP1 LC3 family; targets ubiquitin-coated bacteria (xenophagy) and appears to function in the same pathway as SQSTM1 and CALCOCO2/NDP52. The polypeptide is Optineurin (OPTN) (Pongo abelii (Sumatran orangutan)).